Consider the following 485-residue polypeptide: Neuropeptide F receptor (485 aa).

Topologically, residues 1–91 are extracellular; sequence MIISMNQTEP…DSPWYHMLIS (91 aa). A helical transmembrane segment spans residues 92 to 112; that stretch reads MYGVLIVFGALGNTLVVIAVI. The Cytoplasmic portion of the chain corresponds to 113–122; the sequence is RKPIMRTARN. Residues 123-143 traverse the membrane as a helical segment; sequence LFILNLAISDLLLCLVTMPLT. The Extracellular segment spans residues 144–163; that stretch reads LMEILSKYWPYGSCSILCKT. A disulfide bond links cysteine 161 and cysteine 248. The helical transmembrane segment at 164 to 184 threads the bilayer; it reads IAMLQALCIFVSTISITAIAF. At 185-202 the chain is on the cytoplasmic side; it reads DRYQVIVYPTRDSLQFVG. A helical membrane pass occupies residues 203–223; sequence AVTILAGIWALALLLASPLFV. At 224–262 the chain is on the extracellular side; it reads YKELINTDTPALLQQIGLQDTIPYCIEDWPSRNGRFYYS. The chain crosses the membrane as a helical span at residues 263-283; the sequence is IFSLCVQYLVPILIVSVAYFG. The Cytoplasmic segment spans residues 284 to 317; that stretch reads IYNKLKSRITVVAVQASSAQRKVERGRRMKRTNC. A helical membrane pass occupies residues 318–338; the sequence is LLISIAIIFGVSWLPLNFFNL. Over 339–355 the chain is Extracellular; that stretch reads YADMERSPVTQSMLVRY. Residues 356 to 376 traverse the membrane as a helical segment; the sequence is AICHMIGMSSACSNPLLYGWL. Topologically, residues 377 to 485 are cytoplasmic; sequence NDNFRKEFQE…PSEVTKLMPR (109 aa).

It belongs to the G-protein coupled receptor 1 family. In terms of tissue distribution, expressed in midgut, brain lobes and ventral nerve cord of larvae. In adults, expressed in a pair of dorsolateral neurons in the protocerebrum, and the central complex and a small number of neurons in the subesophageal ganglion (at protein level). Expressed in a subset of sugar-responsive PAIN neurons in the thoracic body but is absent from other peripheral PAIN neurons.

The protein resides in the membrane. In terms of biological role, receptor for NPF. Integral part of the sensory system that mediates food signaling, providing the neural basis for the regulation of food response; coordinates larval foraging and social behavior changes during development. Required in dopaminergic (DA) neurons that innervate the mushroom body for satiety to suppress appetitive memory performance; a key factor in the internal state of hunger in the brain. NPF neurons coordinately modulate diverse sensory and motor neurons important for feeding, flight, and locomotion. NPF/NPFR pathway exerts its suppressive effect on larval aversion to diverse stressful stimuli (chemical stress and noxious heat) through attenuation of TRP channel-induced neuronal excitation. NPF neural signaling system plays a physiological role in acute modulation of alcohol sensitivity in adults, rather than a general response to intoxication by sedative agents. Activation and inhibition of the NPF system reduces and enhances ethanol preference, respectively. Sexual experience, the NPF system activity and ethanol consumption are all linked; sexual deprivation is a major contributor to enhanced ethanol preference. The protein is Neuropeptide F receptor of Drosophila melanogaster (Fruit fly).